An 873-amino-acid chain; its full sequence is Bifunctional uridylyltransferase/uridylyl-removing enzyme (873 aa).

Residues methionine 1–isoleucine 332 are uridylyltransferase. The segment at leucine 333–threonine 692 is uridylyl-removing. In terms of domain architecture, HD spans valine 451 to leucine 573. 2 consecutive ACT domains span residues glutamate 693–arginine 777 and leucine 800–proline 873.

Belongs to the GlnD family. Requires Mg(2+) as cofactor.

It carries out the reaction [protein-PII]-L-tyrosine + UTP = [protein-PII]-uridylyl-L-tyrosine + diphosphate. The enzyme catalyses [protein-PII]-uridylyl-L-tyrosine + H2O = [protein-PII]-L-tyrosine + UMP + H(+). With respect to regulation, uridylyltransferase (UTase) activity is inhibited by glutamine, while glutamine activates uridylyl-removing (UR) activity. Modifies, by uridylylation and deuridylylation, the PII regulatory proteins (GlnB and homologs), in response to the nitrogen status of the cell that GlnD senses through the glutamine level. Under low glutamine levels, catalyzes the conversion of the PII proteins and UTP to PII-UMP and PPi, while under higher glutamine levels, GlnD hydrolyzes PII-UMP to PII and UMP (deuridylylation). Thus, controls uridylylation state and activity of the PII proteins, and plays an important role in the regulation of nitrogen assimilation and metabolism. This is Bifunctional uridylyltransferase/uridylyl-removing enzyme from Vibrio atlanticus (strain LGP32) (Vibrio splendidus (strain Mel32)).